The following is a 416-amino-acid chain: Glutamyl-tRNA reductase (416 aa).

Residues 49–52 (TCNR), Ser-105, 110–112 (EPQ), and Gln-116 each bind substrate. Cys-50 functions as the Nucleophile in the catalytic mechanism. 185-190 (GAGETI) lines the NADP(+) pocket.

It belongs to the glutamyl-tRNA reductase family. In terms of assembly, homodimer.

The catalysed reaction is (S)-4-amino-5-oxopentanoate + tRNA(Glu) + NADP(+) = L-glutamyl-tRNA(Glu) + NADPH + H(+). It participates in porphyrin-containing compound metabolism; protoporphyrin-IX biosynthesis; 5-aminolevulinate from L-glutamyl-tRNA(Glu): step 1/2. Functionally, catalyzes the NADPH-dependent reduction of glutamyl-tRNA(Glu) to glutamate 1-semialdehyde (GSA). This is Glutamyl-tRNA reductase from Shewanella frigidimarina (strain NCIMB 400).